Consider the following 71-residue polypeptide: MFTTKKSMLLFFFLGTISLSLCEQERGADEDDGVEMTEEEVKRGIMDTVKNVAKNLAGQLLDKLKCKITAC.

The first 22 residues, 1–22, serve as a signal peptide directing secretion; that stretch reads MFTTKKSMLLFFFLGTISLSLC. A propeptide spanning residues 23–41 is cleaved from the precursor; that stretch reads EQERGADEDDGVEMTEEEV. Cysteines 66 and 71 form a disulfide.

In terms of tissue distribution, expressed by the skin glands.

Its subcellular location is the secreted. Functionally, may have antimicrobial activity against the Gram-negative bacterium E.coli. This is Ranatuerin-2PLa from Lithobates palustris (Pickerel frog).